Reading from the N-terminus, the 357-residue chain is Intracellular hyaluronan-binding protein 4 (357 aa).

Disordered stretches follow at residues 56 to 116 (VVAR…HKTA), 150 to 186 (ERPR…KREF), and 313 to 357 (PGCG…PALT). A compositionally biased stretch (basic and acidic residues) spans 96-115 (PKQEECGGKDNSRAEKEHKT). Residues 155–171 (CGRGRGGMQGRGRGGGI) are compositionally biased toward gly residues. Residues 176 to 186 (DGFDQRGKREF) are compositionally biased toward basic and acidic residues. Residues 348 to 357 (DDPEDFPALT) are compositionally biased toward acidic residues.

The protein belongs to the SERBP1-HABP4 family. As to quaternary structure, associates with ribosomes; promoting ribosome stabilization. Interacts with EEF2/eEF2; promoting ribosome stabilization.

It localises to the nucleus. Its subcellular location is the cytoplasm. The protein resides in the stress granule. The protein localises to the sarcoplasm. It is found in the nuclear body. It localises to the nucleolus. Its subcellular location is the nucleus speckle. The protein resides in the cajal body. The protein localises to the gem. Its function is as follows. Ribosome-binding protein that promotes ribosome hibernation, a process during which ribosomes are stabilized in an inactive state and preserved from proteasomal degradation. Acts via its association with EEF2/eEF2 factor at the A-site of the ribosome, promoting ribosome stabilization in an inactive state compatible with storage. Plays a key role in ribosome hibernation in the mature egg by promoting ribosome stabilization. Ribosomes, which are produced in large quantities during oogenesis, are stored and translationally repressed in the egg and early embryo. This Gallus gallus (Chicken) protein is Intracellular hyaluronan-binding protein 4.